A 390-amino-acid chain; its full sequence is Transforming growth factor beta-1 proprotein (390 aa).

An N-terminal signal peptide occupies residues 1–29; it reads MPPSGLRLLPLLLPLLWLLMLTPGRPVAG. Residues 30–74 form a straightjacket domain region; sequence LSTCKTIDMELVKRKGIEAIRGQILSKLRLASPPSQGDVPPGPLP. The arm domain stretch occupies residues 75 to 271; that stretch reads EAILALYNST…ATPLERAQHL (197 aa). Asn-82, Asn-136, and Asn-176 each carry an N-linked (GlcNAc...) asparagine glycan. Residues 226 to 252 form a bowtie tail region; that stretch reads DSKDNTLQVDINGFSSGRRGDLATIHG. The Cell attachment site motif lies at 244–246; sequence RGD. Intrachain disulfides connect Cys-285/Cys-294, Cys-293/Cys-356, Cys-322/Cys-387, and Cys-326/Cys-389.

It belongs to the TGF-beta family. Homodimer; disulfide-linked. Interacts with the serine proteases, HTRA1 and HTRA3: the interaction with either inhibits TGFB1-mediated signaling and the HTRA protease activity is required for this inhibition. May interact with THSD4; this interaction may lead to sequestration by FBN1 microfibril assembly and attenuation of TGFB signaling. Interacts with CD109, DPT and ASPN. Interacts with EFEMP2. Interacts with TSKU; the interaction contributes to regulation of the hair cycle. Interacts with TGFBR3. In terms of assembly, homodimer; disulfide-linked. Interacts with transforming growth factor beta-1 (TGF-beta-1) chain; interaction is non-covalent and maintains TGF-beta-1 in a latent state; each latency-associated peptide (LAP) monomer interacts with TGF-beta-1 in the other monomer. Interacts with LTBP1; leading to regulation of TGF-beta-1 activation. Interacts with LRRC32/GARP; leading to regulation of TGF-beta-1 activation on the surface of activated regulatory T-cells (Tregs). Interacts with LRRC33/NRROS; leading to regulation of TGF-beta-1 activation in macrophages and microglia. Interacts (via cell attachment site) with integrins ITGAV and ITGB6 (ITGAV:ITGB6), leading to release of the active TGF-beta-1. Interacts with NREP; the interaction results in a decrease in TGFB1 autoinduction. Interacts with HSP90AB1; inhibits latent TGFB1 activation. As to quaternary structure, homodimer; disulfide-linked. Interacts with TGF-beta receptors (TGFBR1 and TGFBR2), leading to signal transduction. Transforming growth factor beta-1 proprotein: The precursor proprotein is cleaved in the Golgi apparatus by FURIN to form Transforming growth factor beta-1 (TGF-beta-1) and Latency-associated peptide (LAP) chains, which remain non-covalently linked, rendering TGF-beta-1 inactive. Post-translationally, N-glycosylated. Deglycosylation leads to activation of Transforming growth factor beta-1 (TGF-beta-1); mechanisms triggering deglycosylation-driven activation of TGF-beta-1 are however unclear.

The protein localises to the secreted. It is found in the extracellular space. The protein resides in the extracellular matrix. Transforming growth factor beta-1 proprotein: Precursor of the Latency-associated peptide (LAP) and Transforming growth factor beta-1 (TGF-beta-1) chains, which constitute the regulatory and active subunit of TGF-beta-1, respectively. Its function is as follows. Required to maintain the Transforming growth factor beta-1 (TGF-beta-1) chain in a latent state during storage in extracellular matrix. Associates non-covalently with TGF-beta-1 and regulates its activation via interaction with 'milieu molecules', such as LTBP1, LRRC32/GARP and LRRC33/NRROS, that control activation of TGF-beta-1. Interaction with LRRC33/NRROS regulates activation of TGF-beta-1 in macrophages and microglia. Interaction with LRRC32/GARP controls activation of TGF-beta-1 on the surface of activated regulatory T-cells (Tregs). Interaction with integrins (ITGAV:ITGB6 or ITGAV:ITGB8) results in distortion of the Latency-associated peptide chain and subsequent release of the active TGF-beta-1. Functionally, multifunctional protein that regulates the growth and differentiation of various cell types and is involved in various processes, such as normal development, immune function, microglia function and responses to neurodegeneration. Activation into mature form follows different steps: following cleavage of the proprotein in the Golgi apparatus, Latency-associated peptide (LAP) and Transforming growth factor beta-1 (TGF-beta-1) chains remain non-covalently linked rendering TGF-beta-1 inactive during storage in extracellular matrix. At the same time, LAP chain interacts with 'milieu molecules', such as LTBP1, LRRC32/GARP and LRRC33/NRROS that control activation of TGF-beta-1 and maintain it in a latent state during storage in extracellular milieus. TGF-beta-1 is released from LAP by integrins (ITGAV:ITGB6 or ITGAV:ITGB8): integrin-binding to LAP stabilizes an alternative conformation of the LAP bowtie tail and results in distortion of the LAP chain and subsequent release of the active TGF-beta-1. Once activated following release of LAP, TGF-beta-1 acts by binding to TGF-beta receptors (TGFBR1 and TGFBR2), which transduce signal. While expressed by many cells types, TGF-beta-1 only has a very localized range of action within cell environment thanks to fine regulation of its activation by Latency-associated peptide chain (LAP) and 'milieu molecules'. Plays an important role in bone remodeling: acts as a potent stimulator of osteoblastic bone formation, causing chemotaxis, proliferation and differentiation in committed osteoblasts. Can promote either T-helper 17 cells (Th17) or regulatory T-cells (Treg) lineage differentiation in a concentration-dependent manner. At high concentrations, leads to FOXP3-mediated suppression of RORC and down-regulation of IL-17 expression, favoring Treg cell development. At low concentrations in concert with IL-6 and IL-21, leads to expression of the IL-17 and IL-23 receptors, favoring differentiation to Th17 cells. Stimulates sustained production of collagen through the activation of CREB3L1 by regulated intramembrane proteolysis (RIP). Mediates SMAD2/3 activation by inducing its phosphorylation and subsequent translocation to the nucleus. Positively regulates odontoblastic differentiation in dental papilla cells, via promotion of IPO7-mediated translocation of phosphorylated SMAD2 to the nucleus and subsequent transcription of target genes. Can induce epithelial-to-mesenchymal transition (EMT) and cell migration in various cell types. The sequence is that of Transforming growth factor beta-1 proprotein (TGFB1) from Ovis aries (Sheep).